Reading from the N-terminus, the 218-residue chain is ATP phosphoribosyltransferase (218 aa).

Belongs to the ATP phosphoribosyltransferase family. Short subfamily. As to quaternary structure, heteromultimer composed of HisG and HisZ subunits.

Its subcellular location is the cytoplasm. It catalyses the reaction 1-(5-phospho-beta-D-ribosyl)-ATP + diphosphate = 5-phospho-alpha-D-ribose 1-diphosphate + ATP. It participates in amino-acid biosynthesis; L-histidine biosynthesis; L-histidine from 5-phospho-alpha-D-ribose 1-diphosphate: step 1/9. Functionally, catalyzes the condensation of ATP and 5-phosphoribose 1-diphosphate to form N'-(5'-phosphoribosyl)-ATP (PR-ATP). Has a crucial role in the pathway because the rate of histidine biosynthesis seems to be controlled primarily by regulation of HisG enzymatic activity. In Burkholderia mallei (strain ATCC 23344), this protein is ATP phosphoribosyltransferase.